The primary structure comprises 273 residues: 3-methyl-2-oxobutanoate hydroxymethyltransferase (273 aa).

Mg(2+) is bound by residues aspartate 49 and aspartate 88. Residues 49–50 (DS), aspartate 88, and lysine 118 each bind 3-methyl-2-oxobutanoate. Glutamate 120 contributes to the Mg(2+) binding site. The active-site Proton acceptor is the glutamate 187.

Belongs to the PanB family. As to quaternary structure, homodecamer; pentamer of dimers. Mg(2+) is required as a cofactor.

It localises to the cytoplasm. It carries out the reaction 3-methyl-2-oxobutanoate + (6R)-5,10-methylene-5,6,7,8-tetrahydrofolate + H2O = 2-dehydropantoate + (6S)-5,6,7,8-tetrahydrofolate. It functions in the pathway cofactor biosynthesis; (R)-pantothenate biosynthesis; (R)-pantoate from 3-methyl-2-oxobutanoate: step 1/2. Functionally, catalyzes the reversible reaction in which hydroxymethyl group from 5,10-methylenetetrahydrofolate is transferred onto alpha-ketoisovalerate to form ketopantoate. This Rhizobium rhizogenes (strain K84 / ATCC BAA-868) (Agrobacterium radiobacter) protein is 3-methyl-2-oxobutanoate hydroxymethyltransferase.